We begin with the raw amino-acid sequence, 263 residues long: Acidic leucine-rich nuclear phosphoprotein 32 family member E (263 aa).

LRR repeat units follow at residues 43–64 (ELEF…PKLP), 65–84 (KLRK…DVLT), and 89–110 (NITY…EALA). Residues 123–161 (CEITNLEDYRENIFQRLSQITYLDGFDQEDNEAPDSEED) enclose the LRRCT domain. Residues 146 to 263 (DGFDQEDNEA…PEDEGDEDED (118 aa)) are disordered. Acidic residues-rich tracts occupy residues 148–172 (FDQE…DDEE), 180–203 (AEED…EEEV), and 214–242 (RDEE…DEAA). The segment at 202 to 263 (EVGLSYLMKE…PEDEGDEDED (62 aa)) is ZID domain.

This sequence belongs to the ANP32 family. As to quaternary structure, component of a SWR1-like complex. Interacts with H2A.Z/H2AZ1. Phosphorylated. The phosphorylation is nuclear localization signal (NLS)-dependent.

The protein resides in the cytoplasm. The protein localises to the nucleus. Histone chaperone that specifically mediates the genome-wide removal of histone H2A.Z/H2AZ1 from the nucleosome: removes H2A.Z/H2AZ1 from its normal sites of deposition, especially from enhancer and insulator regions. Not involved in deposition of H2A.Z/H2AZ1 in the nucleosome. May stabilize the evicted H2A.Z/H2AZ1-H2B dimer, thus shifting the equilibrium towards dissociation and the off-chromatin state. Inhibits activity of protein phosphatase 2A (PP2A). Does not inhibit protein phosphatase 1. May play a role in cerebellar development and synaptogenesis. The polypeptide is Acidic leucine-rich nuclear phosphoprotein 32 family member E (anp32e) (Xenopus laevis (African clawed frog)).